Consider the following 219-residue polypeptide: Guanylate kinase (219 aa).

In terms of domain architecture, Guanylate kinase-like spans 15 to 194 (GLMFVLSSPS…AFAEVQSILK (180 aa)). 22–29 (SPSGAGKT) lines the ATP pocket.

The protein belongs to the guanylate kinase family.

The protein resides in the cytoplasm. The enzyme catalyses GMP + ATP = GDP + ADP. In terms of biological role, essential for recycling GMP and indirectly, cGMP. The chain is Guanylate kinase from Nitrobacter winogradskyi (strain ATCC 25391 / DSM 10237 / CIP 104748 / NCIMB 11846 / Nb-255).